The following is a 36-amino-acid chain: Turgencin-A (36 aa).

Cystine bridges form between cysteine 8–cysteine 33, cysteine 12–cysteine 29, and cysteine 17–cysteine 26. Methionine 10 carries the post-translational modification Methionine sulfoxide. The residue at position 36 (valine 36) is a Valine amide.

The protein localises to the secreted. In terms of biological role, has antimicrobial activity against Gram-positive bacteria (C.glutamicum ATCC 13032 (MIC=0.4 uM), B.subtilis ATCC 23857 (MIC=0.4 uM) and S.aureus ATCC 9144 (MIC=6.3 uM)) and Gram-negative bacteria (E.coli ATCC 25922 (MIC=0.8 uM) and P.aeruginosa ATCC 27853 (MIC=1.6 uM)). This chain is Turgencin-A, found in Synoicum turgens (Colonial ascidian).